The sequence spans 408 residues: UPF0761 membrane protein NMC0462 (408 aa).

Transmembrane regions (helical) follow at residues 43-63 (LLAL…FPVF), 100-120 (LTAI…RTID), 139-159 (FLVY…GISF), 176-196 (WSGA…LWGL), 210-230 (AFVG…LFTW), and 248-268 (VPFF…GAVL).

It belongs to the UPF0761 family.

Its subcellular location is the cell inner membrane. This is UPF0761 membrane protein NMC0462 from Neisseria meningitidis serogroup C / serotype 2a (strain ATCC 700532 / DSM 15464 / FAM18).